Reading from the N-terminus, the 433-residue chain is Homeobox protein Hox-D3 (433 aa).

Disordered regions lie at residues 44 to 198, 258 to 280, and 401 to 433; these read STPH…SKRV, GILHSPAGQSPERSPPLGGAAGH, and HHGPCDPHPTYTDLSAHHSSQGRLPEAPKLTHL. A compositionally biased stretch (polar residues) spans 58–74; the sequence is SLDSDYPSSACSIQSSA. Residues 97-106 show a composition bias toward gly residues; it reads NSQGGGGGNQ. Residues 116 to 132 are compositionally biased toward pro residues; the sequence is PPQPPPPPPPTLPPSSP. Residues 146 to 159 show a composition bias toward low complexity; that stretch reads GGLSASSSSSTISK. Residues 161–166 carry the Antp-type hexapeptide motif; sequence IFPWMK. The span at 171-183 shows a compositional bias: polar residues; that stretch reads NSKQKNSCATSGE. The segment at residues 195 to 254 is a DNA-binding region (homeobox); the sequence is SKRVRTAYTSAQLVELEKEFHFNRYLCRPRRVEMANLLNLTERQIKIWFQNRRMKYKKDQ.

The protein belongs to the Antp homeobox family. In terms of tissue distribution, detected in adult kidney, but not in other adult tissues tested.

Its subcellular location is the nucleus. Its function is as follows. Sequence-specific transcription factor which is part of a developmental regulatory system that provides cells with specific positional identities on the anterior-posterior axis. This chain is Homeobox protein Hox-D3 (Hoxd3), found in Mus musculus (Mouse).